Here is a 551-residue protein sequence, read N- to C-terminus: MKRKMKMKLVRFGLAAGLAAQVFFLPYNALASTEHVTWNQQFQTPQFISGDLLKVNGTSPEELVYQYVEKNENKFKFHENAKDTLQLKEKKNDNLGFTFMRFQQTYKGIPVFGAVVTAHVKDGTLTALSGTLIPNLDTKGSLKSGKKLSEKQARDIAEKDLVANVTKEVPEYEQGKDTEFVVYVNGDEASLAYVVNLNFLTPEPGNWLYIIDAVDGKILNKFNQLDAAKPGDVKSITGTSTVGVGRGVLGDQKNINTTYSTYYYLQDNTRGNGIFTYDAKYRTTLPGSLWADADNQFFASYDAPAVDAHYYAGVTYDYYKNVHNRLSYDGNNAAIRSSVHYSQGYNNAFWNGSQMVYGDGDGQTFIPLSGGIDVVAHELTHAVTDYTAGLIYQNESGAINEAISDIFGTLVEFYANKNPDWEIGEDVYTPGISGDSLRSMSDPAKYGDPDHYSKRYTGTQDNGGVHINSGIINKAAYLISQGGTHYGVSVVGIGRDKLGKIFYRALTQYLTPTSNFSQLRAAAVQSATDLYGSTSQEVASVKQAFDAVGVK.

The signal sequence occupies residues Met1–Ala31. A propeptide spans Ser32–Ser235 (activation peptide). 4 residues coordinate Ca(2+): Asp292, Asp294, Gln296, and Asp373. Zn(2+) is bound at residue His377. Glu378 is a catalytic residue. Residues His381 and Glu401 each coordinate Zn(2+). Ca(2+) is bound by residues Glu412, Asn418, Asp420, Glu422, Glu425, Thr429, Ile432, and Asp435. Catalysis depends on His466, which acts as the Proton donor.

It belongs to the peptidase M4 family. The cofactor is Ca(2+). Zn(2+) serves as cofactor.

The protein resides in the secreted. The catalysed reaction is Preferential cleavage: Xaa-|-Leu &gt; Xaa-|-Phe.. Its function is as follows. Extracellular zinc metalloprotease. The sequence is that of Thermolysin (nprS) from Geobacillus stearothermophilus (Bacillus stearothermophilus).